Consider the following 317-residue polypeptide: Protein KlaC (317 aa).

In terms of biological role, belongs to the kla operon, which is associated with cryptic tellurite resistance, and IncW plasmid fertility inhibition. The sequence is that of Protein KlaC (klaC) from Escherichia coli.